Reading from the N-terminus, the 403-residue chain is Peroxisomal membrane protein PEX13 (403 aa).

Residues 1 to 11 (MASQPPPPPKP) are compositionally biased toward pro residues. The tract at residues 1–68 (MASQPPPPPK…PSQQTGSSSV (68 aa)) is disordered. The Peroxisomal matrix portion of the chain corresponds to 1-134 (MASQPPPPPK…SSRGAFQSIE (134 aa)). Residues 59–68 (PSQQTGSSSV) are compositionally biased toward polar residues. A helical transmembrane segment spans residues 135-155 (SIVHAFASVSMMMDATFSAVY). The targeting to peroxisomes stretch occupies residues 145–233 (MMMDATFSAV…EDRAATSAKS (89 aa)). Over 156–174 (NSFRAVLDVANHFSRLKIH) the chain is Cytoplasmic. The chain crosses the membrane as a helical span at residues 175–192 (FTKVFSAFALVRTIRYLY). An interaction with PEX19 region spans residues 175 to 196 (FTKVFSAFALVRTIRYLYRRLQ). At 193–233 (RRLQRMLGLRRGSENEDLWAESEGTVACLGAEDRAATSAKS) the chain is on the peroxisomal matrix side. Residues 234-254 (WPIFLFFAVILGGPYLIWKLL) traverse the membrane as a helical segment. Over 255–403 (STHSDEVTDS…IGKDGEKQDL (149 aa)) the chain is Cytoplasmic. In terms of domain architecture, SH3 spans 272-336 (DDHVVARAEY…PANYVKILGK (65 aa)). A Phosphoserine modification is found at Ser-354.

This sequence belongs to the peroxin-13 family. Interacts (via SH3 domain) with PEX14 (via SH3-binding motif); forming the PEX13-PEX14 docking complex. Interacts with PEX19.

It localises to the peroxisome membrane. Component of the PEX13-PEX14 docking complex, a translocon channel that specifically mediates the import of peroxisomal cargo proteins bound to PEX5 receptor. The PEX13-PEX14 docking complex forms a large import pore which can be opened to a diameter of about 9 nm. Mechanistically, PEX5 receptor along with cargo proteins associates with the PEX14 subunit of the PEX13-PEX14 docking complex in the cytosol, leading to the insertion of the receptor into the organelle membrane with the concomitant translocation of the cargo into the peroxisome matrix. Involved in the import of PTS1- and PTS2-type containing proteins. This is Peroxisomal membrane protein PEX13 from Homo sapiens (Human).